The primary structure comprises 251 residues: Uridylate kinase (251 aa).

Position 19 to 22 (19 to 22 (KLSG)) interacts with ATP. Position 61 (Gly-61) interacts with UMP. Residues Gly-62 and Arg-66 each coordinate ATP. UMP contacts are provided by residues Asp-81 and 142 to 149 (TGNPYFTT). Residues Thr-169, Tyr-175, and Asp-178 each coordinate ATP.

This sequence belongs to the UMP kinase family. In terms of assembly, homohexamer.

The protein localises to the cytoplasm. The enzyme catalyses UMP + ATP = UDP + ADP. It functions in the pathway pyrimidine metabolism; CTP biosynthesis via de novo pathway; UDP from UMP (UMPK route): step 1/1. With respect to regulation, inhibited by UTP. Functionally, catalyzes the reversible phosphorylation of UMP to UDP. The sequence is that of Uridylate kinase from Anaeromyxobacter dehalogenans (strain 2CP-C).